Here is a 220-residue protein sequence, read N- to C-terminus: Deoxyribose-phosphate aldolase (220 aa).

Asp89 functions as the Proton donor/acceptor in the catalytic mechanism. Lys151 functions as the Schiff-base intermediate with acetaldehyde in the catalytic mechanism. The active-site Proton donor/acceptor is Lys180.

The protein belongs to the DeoC/FbaB aldolase family. DeoC type 1 subfamily.

It localises to the cytoplasm. It catalyses the reaction 2-deoxy-D-ribose 5-phosphate = D-glyceraldehyde 3-phosphate + acetaldehyde. Its pathway is carbohydrate degradation; 2-deoxy-D-ribose 1-phosphate degradation; D-glyceraldehyde 3-phosphate and acetaldehyde from 2-deoxy-alpha-D-ribose 1-phosphate: step 2/2. Functionally, catalyzes a reversible aldol reaction between acetaldehyde and D-glyceraldehyde 3-phosphate to generate 2-deoxy-D-ribose 5-phosphate. The sequence is that of Deoxyribose-phosphate aldolase from Streptococcus sanguinis (strain SK36).